The sequence spans 409 residues: DEP domain-containing mTOR-interacting protein (409 aa).

Met1 is modified (N-acetylmethionine). Over residues 1-10 (MEEGSSGGSG) the composition is skewed to gly residues. Positions 1-23 (MEEGSSGGSGSSDSNAGGSGGVQ) are disordered. DEP domains lie at 36–119 (TGEQ…RFRK) and 146–219 (PETT…QFRM). Positions 217-235 (FRMNFRRRRRLMELLNETS) match the DDEX motif motif. Ser235 bears the Phosphoserine mark. Phosphothreonine is present on Thr241. Ser244 and Ser258 each carry phosphoserine. Thr259 is subject to Phosphothreonine. Residues Ser263, Ser265, Ser280, Ser282, Ser283, Ser286, and Ser287 each carry the phosphoserine modification. The short motif at 286-291 (SSGYFS) is the BetaTrCP degron motif element. Tyr289 carries the phosphotyrosine modification. 2 positions are modified to phosphoserine: Ser291 and Ser293. Thr295 carries the post-translational modification Phosphothreonine. Residues Ser297, Ser298, and Ser299 each carry the phosphoserine modification. The PDZ domain occupies 330-407 (TFTIVGDAVG…TIVMEVMEEL (78 aa)).

In terms of assembly, associated component of the mechanistic target of rapamycin complex 1 (mTORC1) which contains MTOR, MLST8 and RPTOR. Associated component of the mechanistic target of rapamycin complex 2 (mTORC2) which contains MTOR, MLST8, PROTOR1, RICTOR, MAPKAP1 and DEPTOR. Interacts (via PDZ domain) with MTOR; interacts with MTOR within both mTORC1 and mTORC2. Interacts (via PDZ domain) with MINAR1 (via N-terminus). Interacts with SIK3. Phosphorylation weakens interaction with MTOR within mTORC1 and mTORC2. Phosphorylated at Ser-286, Ser-287 and Ser-291 in response to mitogenic stimulation by MTOR: DEPTOR is either directly phosphorylated by MTOR or indirectly via proteins kinases that are activated by MTOR, such as CK1/CSNK1A1. Phosphorylation at Ser-286, Ser-287 and Ser-291 promotes ubiquitination by the SCF(BTRC) complex, followed by degradation. Phosphorylation at Ser-235 by MAPK3/ERK1 promotes deubiquitination by USP7, enhancing its stability. Phosphorylation at Tyr-291 by SYK impairs its interaction with MTOR, promoting mTORC1 and mTORC2 signaling. In terms of processing, ubiquitinated; leading to proteasomal degradation. Ubiquitination by the SCF(BTRC) and SCF(FBXW11) complexes following phosphorylation at Ser-286, Ser-287 and Ser-291 by MTOR, leads to its degradation by the proteasome. Deubiquitinated by OTUB1 in response to amino acid via a non-canonical mechanism, leading to DEPTOR stability. Deubiquitinated by USP7 following phosphorylation at Ser-235, promoting its stability.

It is found in the lysosome membrane. Its activity is regulated as follows. Inhibited upon phosphatidic acid-binding: phosphatidic acid produced upon mitogenic stimulation promotes DEPTOR dissociatiom from the mTORC1 and mTORC2 complexes, leading to their activation. Specifically binds unsaturated phosphatidic acid, such as 16:0-18:1, 18:0-18:1 and di-18:1. Inhibited when nutrients are present via a feedback loop: phosphorylation by MTOR promotes DEPTOR ubiquitination and degradation. Functionally, negative regulator of the mTORC1 and mTORC2 complexes: inhibits the protein kinase activity of MTOR, thereby inactivating both complexes. DEPTOR inhibits mTORC1 and mTORC2 to induce autophagy. In contrast to AKT1S1/PRAS40, only partially inhibits mTORC1 activity. The polypeptide is DEP domain-containing mTOR-interacting protein (Mus musculus (Mouse)).